The primary structure comprises 59 residues: MRQLRGKPKKETSKDKKERKQAMQEARQQITTVVLPTLAVVVLLIVVFVYVATRPNTTE.

Residues 1–25 (MRQLRGKPKKETSKDKKERKQAMQE) form a disordered region. Residues 9–22 (KKETSKDKKERKQA) are compositionally biased toward basic and acidic residues. A coiled-coil region spans residues 9–31 (KKETSKDKKERKQAMQEARQQIT). Residues 32 to 52 (TVVLPTLAVVVLLIVVFVYVA) form a helical membrane-spanning segment.

It belongs to the SMCO4 family.

The protein localises to the membrane. In Taeniopygia guttata (Zebra finch), this protein is Single-pass membrane and coiled-coil domain-containing protein 4 (smco4).